The primary structure comprises 782 residues: Cyclic nucleotide-gated channel beta-3 (782 aa).

Disordered stretches follow at residues 1-111 and 147-168; these read MFKS…PKSK and GDIS…PSTQ. The Cytoplasmic portion of the chain corresponds to 1 to 213; it reads MFKSLTIKSN…SIDSYTDRLY (213 aa). Composition is skewed to basic and acidic residues over residues 13-25 and 57-73; these read KPRE…KQDP and EESH…KNSL. 2 stretches are compositionally biased toward polar residues: residues 74 to 83 and 152 to 168; these read RDLTTNPNHQ and PEAS…PSTQ. A helical membrane pass occupies residues 214–237; that stretch reads LLWLLLVTIAYNWNCWLIPLRLVF. Residues 238–244 lie on the Extracellular side of the membrane; it reads PYQTPDN. A helical membrane pass occupies residues 245 to 265; it reads THYWFITDITCDIIYLCDMLL. Topologically, residues 266-294 are cytoplasmic; that stretch reads IQPRLQFIKGGDIMVDSNELKRHYRSSTK. A helical transmembrane segment spans residues 295–312; it reads FQLDVASVMPFDVFYLFF. Over 313–315 the chain is Extracellular; sequence GFN. Residues 316–330 traverse the membrane as a helical segment; sequence PVFRMNRILKYTSFF. The Cytoplasmic segment spans residues 331 to 343; the sequence is EFNHHLESIMDKA. The ion conduction pathway stretch occupies residues 343-442; the sequence is AYIYRVIRTT…IGQMQDVIGA (100 aa). A helical transmembrane segment spans residues 344–366; sequence YIYRVIRTTGYLLYTLHINACIY. Residues 367-388 lie on the Extracellular side of the membrane; the sequence is YWASDYEGIGSTKWVYNGEGNK. 2 helical membrane passes run 389–415 and 416–440; these read YLRC…SFEI and VFQL…QDVI. A selectivity filter region spans residues 402 to 405; the sequence is TIGG. Residues 441–782 are Cytoplasmic-facing; the sequence is GAATANQNNF…TIEVKEKAKQ (342 aa). The interval 445–521 is C-linker; sequence ANQNNFRISM…SIISKVELFK (77 aa). The interval 525–641 is cyclic nucleotide-binding domain; sequence TQMIYDMLLR…LLMKKASVLL (117 aa). 3',5'-cyclic GMP is bound by residues Gly586, Glu587, Arg599, and Thr600. The disordered stretch occupies residues 692–724; sequence EQTIQKTSENSEEGGGKRREYEDKEREPSEKIL. Basic and acidic residues predominate over residues 705–724; sequence GGGKRREYEDKEREPSEKIL.

Belongs to the cyclic nucleotide-gated cation channel (TC 1.A.1.5) family. CNGB3 subfamily. Forms heterotetrameric channels composed of CNGA3 and CNGB3 subunits with 3:1 stoichiometry.

It localises to the cell membrane. It carries out the reaction Ca(2+)(in) = Ca(2+)(out). It catalyses the reaction Na(+)(in) = Na(+)(out). The enzyme catalyses K(+)(in) = K(+)(out). The catalysed reaction is NH4(+)(in) = NH4(+)(out). It carries out the reaction Rb(+)(in) = Rb(+)(out). It catalyses the reaction Li(+)(in) = Li(+)(out). The enzyme catalyses Cs(+)(in) = Cs(+)(out). Pore-forming subunit of the cone cyclic nucleotide-gated channel. Mediates cone photoresponses at bright light converting transient changes in intracellular cGMP levels into electrical signals. In the dark, cGMP levels are high and keep the channel open enabling a steady inward current carried by Na(+) and Ca(2+) ions that leads to membrane depolarization and neurotransmitter release from synaptic terminals. Upon photon absorption cGMP levels decline leading to channel closure and membrane hyperpolarization that ultimately slows neurotransmitter release and signals the presence of light, the end point of the phototransduction cascade. Conducts cGMP- and cAMP-gated ion currents, with permeability for monovalent and divalent cations. In Canis lupus familiaris (Dog), this protein is Cyclic nucleotide-gated channel beta-3.